Consider the following 999-residue polypeptide: Hypoxia up-regulated protein 1 (999 aa).

An N-terminal signal peptide occupies residues 1 to 32; sequence MADKVRRQRPRRRVCWALVAVLLADLLALSDT. N-linked (GlcNAc...) asparagine glycans are attached at residues Asn155, Asn222, and Asn515. Ser567 is subject to Phosphoserine. The disordered stretch occupies residues 578-694; it reads GNTISSLFGG…KKQKPARKRR (117 aa). N-linked (GlcNAc...) asparagine glycosylation is present at Asn596. Composition is skewed to basic and acidic residues over residues 611-626 and 641-672; these read GSKD…KEEA and PKGD…KAEA. N-linked (GlcNAc...) asparagine glycosylation is found at Asn830, Asn862, and Asn869. At Lys883 the chain carries N6-acetyllysine. Positions 909 to 999 are disordered; the sequence is AKFTKPRPRP…QKRPLKNDEL (91 aa). 2 N-linked (GlcNAc...) asparagine glycosylation sites follow: Asn922 and Asn931. The short motif at 996-999 is the Prevents secretion from ER element; sequence NDEL.

Belongs to the heat shock protein 70 family. In terms of assembly, part of a large chaperone multiprotein complex comprising DNAJB11, HSP90B1, HSPA5, HYOU, PDIA2, PDIA4, PDIA6, PPIB, SDF2L1, UGGT1 and very small amounts of ERP29, but not, or at very low levels, CALR nor CANX. Highly expressed in tissues that contain well-developed endoplasmic reticulum and synthesize large amounts of secretory proteins. Highly expressed in liver and pancreas and lower expression in brain and kidney. Also expressed in macrophages within aortic atherosclerotic plaques, and in breast cancers.

Its subcellular location is the endoplasmic reticulum lumen. Has a pivotal role in cytoprotective cellular mechanisms triggered by oxygen deprivation. Promotes HSPA5/BiP-mediated ATP nucleotide exchange and thereby activates the unfolded protein response (UPR) pathway in the presence of endoplasmic reticulum stress. May play a role as a molecular chaperone and participate in protein folding. This chain is Hypoxia up-regulated protein 1 (HYOU1), found in Homo sapiens (Human).